The primary structure comprises 529 residues: Peptide chain release factor 3 (529 aa).

Residues 11 to 280 form the tr-type G domain; it reads NSRRTFAIIS…AFINWAPEPK (270 aa). Residues 20–27, 88–92, and 142–145 each bind GTP; these read SHPDAGKT, DTPGH, and NKMD.

The protein belongs to the TRAFAC class translation factor GTPase superfamily. Classic translation factor GTPase family. PrfC subfamily.

The protein localises to the cytoplasm. Functionally, increases the formation of ribosomal termination complexes and stimulates activities of RF-1 and RF-2. It binds guanine nucleotides and has strong preference for UGA stop codons. It may interact directly with the ribosome. The stimulation of RF-1 and RF-2 is significantly reduced by GTP and GDP, but not by GMP. This chain is Peptide chain release factor 3, found in Acinetobacter baylyi (strain ATCC 33305 / BD413 / ADP1).